The chain runs to 352 residues: Heat-inducible transcription repressor HrcA (352 aa).

It belongs to the HrcA family.

Functionally, negative regulator of class I heat shock genes (grpE-dnaK-dnaJ and groELS operons). Prevents heat-shock induction of these operons. The polypeptide is Heat-inducible transcription repressor HrcA (Thermosynechococcus vestitus (strain NIES-2133 / IAM M-273 / BP-1)).